The chain runs to 199 residues: Recombination protein RecR (199 aa).

The segment at 57 to 72 (CEICGNMDTENICRIC) adopts a C4-type zinc-finger fold. One can recognise a Toprim domain in the interval 80 to 175 (SVIAIVETVA…KISRLASGIP (96 aa)).

Belongs to the RecR family.

In terms of biological role, may play a role in DNA repair. It seems to be involved in an RecBC-independent recombinational process of DNA repair. It may act with RecF and RecO. The chain is Recombination protein RecR from Rickettsia canadensis (strain McKiel).